Consider the following 969-residue polypeptide: Alanine--tRNA ligase (969 aa).

A mitochondrion-targeting transit peptide spans 1 to 8 (MIKTLLRR). Residues H616, H620, C735, and H739 each contribute to the Zn(2+) site.

Belongs to the class-II aminoacyl-tRNA synthetase family. Monomer. Zn(2+) is required as a cofactor.

It localises to the mitochondrion. It is found in the cytoplasm. The enzyme catalyses tRNA(Ala) + L-alanine + ATP = L-alanyl-tRNA(Ala) + AMP + diphosphate. In terms of biological role, catalyzes the attachment of alanine to tRNA(Ala) in a two-step reaction: alanine is first activated by ATP to form Ala-AMP and then transferred to the acceptor end of tRNA(Ala). Also edits incorrectly charged tRNA(Ala) via its editing domain. This is Alanine--tRNA ligase from Candida albicans (strain SC5314 / ATCC MYA-2876) (Yeast).